A 160-amino-acid polypeptide reads, in one-letter code: Protein-export protein SecB (160 aa).

Belongs to the SecB family. In terms of assembly, homotetramer, a dimer of dimers. One homotetramer interacts with 1 SecA dimer.

Its subcellular location is the cytoplasm. Its function is as follows. One of the proteins required for the normal export of preproteins out of the cell cytoplasm. It is a molecular chaperone that binds to a subset of precursor proteins, maintaining them in a translocation-competent state. It also specifically binds to its receptor SecA. The protein is Protein-export protein SecB of Rhodospirillum rubrum (strain ATCC 11170 / ATH 1.1.1 / DSM 467 / LMG 4362 / NCIMB 8255 / S1).